A 372-amino-acid chain; its full sequence is Phospho-2-dehydro-3-deoxyheptonate aldolase, tyrosine-inhibited (372 aa).

This sequence belongs to the class-I DAHP synthase family.

The protein resides in the cytoplasm. It is found in the nucleus. The enzyme catalyses D-erythrose 4-phosphate + phosphoenolpyruvate + H2O = 7-phospho-2-dehydro-3-deoxy-D-arabino-heptonate + phosphate. The protein operates within metabolic intermediate biosynthesis; chorismate biosynthesis; chorismate from D-erythrose 4-phosphate and phosphoenolpyruvate: step 1/7. Stereospecific condensation of phosphoenolpyruvate (PEP) and D-erythrose-4-phosphate (E4P) giving rise to 3-deoxy-D-arabino-heptulosonate-7-phosphate (DAHP). This is Phospho-2-dehydro-3-deoxyheptonate aldolase, tyrosine-inhibited (aro4) from Schizosaccharomyces pombe (strain 972 / ATCC 24843) (Fission yeast).